The sequence spans 239 residues: tRNA (guanine-N(7)-)-methyltransferase (239 aa).

S-adenosyl-L-methionine-binding residues include Glu69, Glu94, Asp121, and Asp144. Residue Asp144 is part of the active site. Residue Lys148 coordinates substrate. Residues 150–155 (RHNKRR) form an interaction with RNA region. Substrate-binding positions include Asp180 and 217–220 (TKFE).

This sequence belongs to the class I-like SAM-binding methyltransferase superfamily. TrmB family. Monomer.

It catalyses the reaction guanosine(46) in tRNA + S-adenosyl-L-methionine = N(7)-methylguanosine(46) in tRNA + S-adenosyl-L-homocysteine. It functions in the pathway tRNA modification; N(7)-methylguanine-tRNA biosynthesis. In terms of biological role, catalyzes the formation of N(7)-methylguanine at position 46 (m7G46) in tRNA. This is tRNA (guanine-N(7)-)-methyltransferase from Shigella flexneri serotype 5b (strain 8401).